The chain runs to 84 residues: Small ribosomal subunit protein bS18 (84 aa).

It belongs to the bacterial ribosomal protein bS18 family. Part of the 30S ribosomal subunit. Forms a tight heterodimer with protein bS6.

Functionally, binds as a heterodimer with protein bS6 to the central domain of the 16S rRNA, where it helps stabilize the platform of the 30S subunit. This Mycoplasma mobile (strain ATCC 43663 / 163K / NCTC 11711) (Mesomycoplasma mobile) protein is Small ribosomal subunit protein bS18.